The chain runs to 356 residues: Histidinol-phosphate aminotransferase (356 aa).

Lys-214 carries the N6-(pyridoxal phosphate)lysine modification.

It belongs to the class-II pyridoxal-phosphate-dependent aminotransferase family. Histidinol-phosphate aminotransferase subfamily. Homodimer. It depends on pyridoxal 5'-phosphate as a cofactor.

It catalyses the reaction L-histidinol phosphate + 2-oxoglutarate = 3-(imidazol-4-yl)-2-oxopropyl phosphate + L-glutamate. The protein operates within amino-acid biosynthesis; L-histidine biosynthesis; L-histidine from 5-phospho-alpha-D-ribose 1-diphosphate: step 7/9. The protein is Histidinol-phosphate aminotransferase of Shigella boydii serotype 4 (strain Sb227).